Reading from the N-terminus, the 558-residue chain is MFVSSRKTGLIVCFSLIGYTASAFSASLNPAERNETQQRQSEVIEQSRQQREALQQLNNIVQAPLKADNALQGPCFTLREIRFNHSTLLGQRDQTALTAGYLNRCNNLEQINQLMHDVSNWYIQRGYITSRAFLSEQDLSGGVLQLEILEGRLEKITINNQTERMTRTAFPAREGEILNLRDIEQGMEQMNRMPSQQVTIEILPGSQPGYSVVNLTREAHLPFTGGVTFDNSGQKSTGEQQLNGSLALDNLFGVADQWFISAGHSSRFATSHDAESLQAGFSMPYGYWNLGYSYSQSRYRNTFISRDFPWHSTGDSDTHRLSLSRVVFRNGTMKTAIVGMLSQRTGNNYLNGTLLPSSSRKLSSVSLGVNHSQKLWGGLATFNPTYNRGVRWLGAETDTDKSADEPRAEFNKWTLSASYYYPLTDSITYLGSLYGQYSARALYGSEQMTLGGESSVRGFREQYTSGNRGAYWRNELNWQAWQLPVLGNVTFMAAVDGGHLYNHKQDDSTAASLWGGAVGVTVASRWLSQQVTVGWPISYPAWLQPDTVVVGYRVGLSF.

The signal sequence occupies residues 1–25 (MFVSSRKTGLIVCFSLIGYTASAFS). Residues 34–62 (NETQQRQSEVIEQSRQQREALQQLNNIVQ) are a coiled coil. One can recognise a POTRA domain in the interval 76-151 (FTLREIRFNH…GVLQLEILEG (76 aa)).

Belongs to the TPS (TC 1.B.20) family.

It is found in the cell outer membrane. In terms of biological role, probable outer membrane protein component of a toxin-immunity protein module, which functions as a cellular contact-dependent growth inhibition (CDI) system. CDI modules allow bacteria to communicate with and inhibit the growth of closely related neighboring bacteria in a contact-dependent fashion. This protein may be required for secretion and assembly of the CdiA toxin. Functionally, probable member of a two partner secretion pathway (TPS) in which it mediates the secretion of CdiA. This chain is Outer membrane transporter CdiB (cdiB), found in Dickeya dadantii (strain 3937) (Erwinia chrysanthemi (strain 3937)).